We begin with the raw amino-acid sequence, 264 residues long: Thymidylate synthase (264 aa).

Arginine 21 lines the dUMP pocket. Histidine 51 serves as a coordination point for (6R)-5,10-methylene-5,6,7,8-tetrahydrofolate. Residue cysteine 146 is the Nucleophile of the active site. DUMP-binding positions include 166 to 169 (RSAD), asparagine 177, and 207 to 209 (HIY). Aspartate 169 lines the (6R)-5,10-methylene-5,6,7,8-tetrahydrofolate pocket. Alanine 263 contacts (6R)-5,10-methylene-5,6,7,8-tetrahydrofolate.

It belongs to the thymidylate synthase family. Bacterial-type ThyA subfamily. As to quaternary structure, homodimer.

It is found in the cytoplasm. The enzyme catalyses dUMP + (6R)-5,10-methylene-5,6,7,8-tetrahydrofolate = 7,8-dihydrofolate + dTMP. The protein operates within pyrimidine metabolism; dTTP biosynthesis. Catalyzes the reductive methylation of 2'-deoxyuridine-5'-monophosphate (dUMP) to 2'-deoxythymidine-5'-monophosphate (dTMP) while utilizing 5,10-methylenetetrahydrofolate (mTHF) as the methyl donor and reductant in the reaction, yielding dihydrofolate (DHF) as a by-product. This enzymatic reaction provides an intracellular de novo source of dTMP, an essential precursor for DNA biosynthesis. This chain is Thymidylate synthase, found in Brucella canis (strain ATCC 23365 / NCTC 10854 / RM-666).